Reading from the N-terminus, the 141-residue chain is Large ribosomal subunit protein uL11A (141 aa).

This sequence belongs to the universal ribosomal protein uL11 family. As to quaternary structure, part of the ribosomal stalk of the 50S ribosomal subunit. Interacts with L10 and the large rRNA to form the base of the stalk. L10 forms an elongated spine to which L12 dimers bind in a sequential fashion forming a multimeric L10(L12)X complex. One or more lysine residues are methylated.

Forms part of the ribosomal stalk which helps the ribosome interact with GTP-bound translation factors. In Bacillus cereus (strain ATCC 14579 / DSM 31 / CCUG 7414 / JCM 2152 / NBRC 15305 / NCIMB 9373 / NCTC 2599 / NRRL B-3711), this protein is Large ribosomal subunit protein uL11A.